We begin with the raw amino-acid sequence, 247 residues long: MKFLVDTHAHTIASTHAYSTLHDYLNVAKEKGIKLFAITDHGPDMADAPHFWHFVNMRVLPRIIDGVGVLRGIEANIKNQQGDIDFFGDYLKQLDIVLAGFHEPVFPPSTAENHTQALINCIESGKVDIISHPGNPAYPIDIERVAQAAAKHNVALEINNSSFLTSRKGSEKSCRAIALAVKEAGGLLVMGSDSHVAFSLGDFDKAVEVIEAVQFPIERLLNRSPEALLCFLSARGHDSLDEYADLV.

Positions 8, 10, 16, 41, 74, 102, 132, 193, and 195 each coordinate Zn(2+).

It belongs to the PHP family. Requires Zn(2+) as cofactor.

This chain is Probable phosphatase swp_1620, found in Shewanella piezotolerans (strain WP3 / JCM 13877).